Reading from the N-terminus, the 290-residue chain is Ribosomal RNA small subunit methyltransferase A (290 aa).

S-adenosyl-L-methionine-binding residues include Asn-27, Leu-29, Gly-54, Glu-75, Asp-100, and Asn-125.

This sequence belongs to the class I-like SAM-binding methyltransferase superfamily. rRNA adenine N(6)-methyltransferase family. RsmA subfamily.

Its subcellular location is the cytoplasm. The enzyme catalyses adenosine(1518)/adenosine(1519) in 16S rRNA + 4 S-adenosyl-L-methionine = N(6)-dimethyladenosine(1518)/N(6)-dimethyladenosine(1519) in 16S rRNA + 4 S-adenosyl-L-homocysteine + 4 H(+). In terms of biological role, specifically dimethylates two adjacent adenosines (A1518 and A1519) in the loop of a conserved hairpin near the 3'-end of 16S rRNA in the 30S particle. May play a critical role in biogenesis of 30S subunits. The chain is Ribosomal RNA small subunit methyltransferase A from Streptococcus thermophilus (strain ATCC BAA-250 / LMG 18311).